The following is a 321-amino-acid chain: Gap junction delta-2 protein (321 aa).

Topologically, residues 1–19 are cytoplasmic; it reads MGEWTILERLLEAAVQQHS. A helical transmembrane segment spans residues 20 to 42; the sequence is TMIGRILLTVVVIFRILIVAIVG. The Extracellular portion of the chain corresponds to 43–75; it reads ETVYDDEQTMFVCNTLQPGCNQACYDRAFPISH. A helical membrane pass occupies residues 76–98; it reads IRYWVFQIIMVCTPSLCFITYSV. Over 99 to 197 the chain is Cytoplasmic; that stretch reads HQSAKQRERR…KLRRQEGISR (99 aa). A disordered region spans residues 118-141; sequence RDPPESIGGPGGTGGGGSGGGKRE. The span at 125-137 shows a compositional bias: gly residues; sequence GGPGGTGGGGSGG. The chain crosses the membrane as a helical span at residues 198 to 220; the sequence is FYIIQVVFRNALEIGFLVGQYFL. At 221–252 the chain is on the extracellular side; it reads YGFSVPGLYECNRYPCIKEVECYVSRPTEKTV. Residues 253–275 form a helical membrane-spanning segment; sequence FLVFMFAVSGICVVLNLAELNHL. Over 276–321 the chain is Cytoplasmic; sequence GWRKIKLAVRGAQAKRKSIYEIRNKDLPRVSVPNFGRTQSSDSAYV.

The protein belongs to the connexin family. Delta-type subfamily. As to quaternary structure, a connexon is composed of a hexamer of connexins. In terms of tissue distribution, highly expressed in neurons.

It is found in the cell membrane. Its subcellular location is the cell junction. The protein resides in the gap junction. One gap junction consists of a cluster of closely packed pairs of transmembrane channels, the connexons, through which materials of low MW diffuse from one cell to a neighboring cell. This is Gap junction delta-2 protein (GJD2) from Homo sapiens (Human).